A 1118-amino-acid chain; its full sequence is Protein SUPPRESSOR OF NPR1-1 CONSTITUTIVE 4 (1118 aa).

Positions 1-35 (MNSQQSTRTKQMLQQSSTHLLCGVVLLQLFAAQVD) are cleaved as a signal peptide. Topologically, residues 36 to 751 (AQRSTSPWQT…PLRNFLKVIR (716 aa)) are extracellular. Positions 51 to 353 (PLVIARGGFS…DFPLTASASV (303 aa)) constitute a GP-PDE 1 domain. Residues Asn106, Asn195, Asn251, Asn260, Asn318, Asn335, Asn362, Asn422, Asn433, Asn497, Asn557, Asn573, and Asn656 are each glycosylated (N-linked (GlcNAc...) asparagine). The region spanning 369 to 670 (FLVISKNGAS…EFPYTAARYK (302 aa)) is the GP-PDE 2 domain. A helical transmembrane segment spans residues 752 to 772 (IVSWSVAGVVLFLVLLTLVFC). The Cytoplasmic portion of the chain corresponds to 773 to 1118 (FHRKRETRLR…SEDVSVYTEG (346 aa)). Residues 805-1094 (KSFAEVVGRG…ALEVPPRPVL (290 aa)) enclose the Protein kinase domain. ATP contacts are provided by residues 811–819 (VGRGGFGIV) and Lys833. Asp928 functions as the Proton acceptor in the catalytic mechanism.

This sequence in the N-terminal section; belongs to the glycerophosphoryl diester phosphodiesterase family. It in the C-terminal section; belongs to the protein kinase superfamily. Ser/Thr protein kinase family. As to expression, expressed in shoots, rosette and cauline leaves, stems, flowers and siliques.

The protein resides in the cell membrane. It catalyses the reaction a sn-glycero-3-phosphodiester + H2O = an alcohol + sn-glycerol 3-phosphate + H(+). The catalysed reaction is L-seryl-[protein] + ATP = O-phospho-L-seryl-[protein] + ADP + H(+). It carries out the reaction L-threonyl-[protein] + ATP = O-phospho-L-threonyl-[protein] + ADP + H(+). Atypical receptor-like kinase involved in disease resistance. This is Protein SUPPRESSOR OF NPR1-1 CONSTITUTIVE 4 from Arabidopsis thaliana (Mouse-ear cress).